The primary structure comprises 422 residues: 26S proteasome non-ATPase regulatory subunit 11 (422 aa).

Position 2 is an N-acetylalanine (alanine 2). 2 positions are modified to phosphoserine: serine 14 and serine 23. The region spanning 224 to 392 (DWKTAYSYFY…GVLIIFDEPP (169 aa)) is the PCI domain. Residue lysine 274 forms a Glycyl lysine isopeptide (Lys-Gly) (interchain with G-Cter in SUMO2) linkage.

This sequence belongs to the proteasome subunit S9 family. Component of the 19S proteasome regulatory particle complex. The 26S proteasome consists of a 20S core particle (CP) and two 19S regulatory subunits (RP). The regulatory particle is made of a lid composed of 9 subunits including PSMD11, a base containing 6 ATPases and few additional components.

Functionally, component of the 26S proteasome, a multiprotein complex involved in the ATP-dependent degradation of ubiquitinated proteins. This complex plays a key role in the maintenance of protein homeostasis by removing misfolded or damaged proteins, which could impair cellular functions, and by removing proteins whose functions are no longer required. Therefore, the proteasome participates in numerous cellular processes, including cell cycle progression, apoptosis, or DNA damage repair. In the complex, PSMD11 is required for proteasome assembly. Plays a key role in increased proteasome activity in embryonic stem cells (ESCs): its high expression in ESCs promotes enhanced assembly of the 26S proteasome, followed by higher proteasome activity. The chain is 26S proteasome non-ATPase regulatory subunit 11 (Psmd11) from Mus musculus (Mouse).